The following is a 343-amino-acid chain: Tumor necrosis factor receptor superfamily member wgn (343 aa).

Disordered regions lie at residues 1–44 (MMPP…IGGS) and 74–96 (SSAANTDIAPPDPPPVSQVSIAS). The N-terminal stretch at 1–76 (MMPPRLPGGH…ATSASSSSSA (76 aa)) is a signal peptide. Residues 13-24 (AMRSRSSSSGHH) are compositionally biased toward low complexity. The span at 29-39 (FHKRRRRRQQH) shows a compositional bias: basic residues. The Extracellular segment spans residues 77–201 (ANTDIAPPDP…AAWVLDWQTG (125 aa)). Residues 99–137 (PCAPQHWWDSQRDRCTPCTRCQGEMIPLRPCQLHTDTIC) form a TNFR-Cys repeat. Cystine bridges form between cysteine 100–cysteine 113, cysteine 116–cysteine 129, and cysteine 119–cysteine 137. Residues 202–222 (VLYVAVLTCLVFFSVAACILI) form a helical membrane-spanning segment. At 223–343 (HHMRQWRRME…GVRGCSGLKG (121 aa)) the chain is on the cytoplasmic side. Residues 225-257 (MRQWRRMERRLDQDVEELSTKLMAKLAEVQSLD) adopt a coiled-coil conformation.

As to quaternary structure, monomer. Interacts (via extracellular cystein-rich domain) with egr (via secreted TNF-homology soluble form); forms heterohexamers when 3 copies associate with egr trimers. Interacts with Traf6. Interacts with Moe. In terms of tissue distribution, expressed in the adult midgut; under normal conditions expressed at higher levels than the other TNF receptor grnd.

The protein resides in the cell membrane. It is found in the cytoplasmic vesicle membrane. Receptor for egr. Involved in induction of apoptosis by triggering JNK signaling. Mediates the tumor suppressor activity of egr which eliminates oncogenic cells from epithelia, thereby maintaining epithelial integrity. Following UV-induced epidermal damage, binds to egr released from apoptotic epidermal cells and plays a role in development of thermal allodynia, a responsiveness to subthreshold thermal stimuli which are not normally perceived as noxious. Together with Moe, involved in control of axon targeting of R8 and R2-R5 photoreceptors, independent of egr. This is Tumor necrosis factor receptor superfamily member wgn from Drosophila melanogaster (Fruit fly).